We begin with the raw amino-acid sequence, 403 residues long: Odorant receptor 43b (403 aa).

The Cytoplasmic portion of the chain corresponds to 1 to 49; that stretch reads MFGHFKLVYPAPISEPIQSRDSNAYMMETLRNSGLNLKNDFGIGRKIWR. Residues 50 to 70 traverse the membrane as a helical segment; sequence VFSFTYNMVILPVSFPINYVI. The Extracellular segment spans residues 71-83; sequence HLAEFPPELLLQS. A helical transmembrane segment spans residues 84 to 104; that stretch reads LQLCLNTWCFALKFFTLIVYT. The Cytoplasmic segment spans residues 105–139; the sequence is HRLELANKHFDELDKYCVKPAEKRKVRDMVATITR. The chain crosses the membrane as a helical span at residues 140–160; that stretch reads LYLTFVVVYVLYATSTLLDGL. Residues 161-193 lie on the Extracellular side of the membrane; the sequence is LHHRVPYNTYYPFINWRVDRTQMYIQSFLEYFT. The chain crosses the membrane as a helical span at residues 194 to 214; sequence VGYAIYVATATDSYPVIYVAA. At 215–271 the chain is on the cytoplasmic side; it reads LRTHILLLKDRIIYLGDPSNEGSSDPSYMFKSLVDCIKAHRTMLNFCDAIQPIISGT. The helical transmembrane segment at 272–292 threads the bilayer; that stretch reads IFAQFIICGSILGIIMINMVL. Topologically, residues 293-299 are extracellular; it reads FADQSTR. The chain crosses the membrane as a helical span at residues 300–320; the sequence is FGIVIYVMAVLLQTFPLCFYC. The Cytoplasmic portion of the chain corresponds to 321-372; sequence NAIVDDCKELAHALFHSAWWVQDKRYQRTVIQFLQKLQQPMTFTAMNIFNIN. The helical transmembrane segment at 373-393 threads the bilayer; that stretch reads LATNINVAKFAFTVYAIASGM. Residues 394–403 lie on the Extracellular side of the membrane; it reads NLDQKLSIKE.

This sequence belongs to the insect chemoreceptor superfamily. Heteromeric odorant receptor channel (TC 1.A.69) family. Or2a subfamily. In terms of assembly, interacts with Orco. Complexes exist early in the endomembrane system in olfactory sensory neurons (OSNs), coupling these complexes to the conserved ciliary trafficking pathway. As to expression, expressed in 16 olfactory receptor neurons in a broad area across the antenna, including both anterior and posterior faces and in the maxillary palp. This expression pattern matches the distribution of the small sensilla basiconica. Expression in the antenna is observed late in antennal development at 93 hours APF.

It is found in the cell membrane. Its function is as follows. Odorant receptor which mediates acceptance or avoidance behavior, depending on its substrates. The odorant receptor repertoire encodes a large collection of odor stimuli that vary widely in identity, intensity, and duration. May form a complex with Orco to form odorant-sensing units, providing sensitive and prolonged odorant signaling and calcium permeability. In Drosophila melanogaster (Fruit fly), this protein is Odorant receptor 43b (Or43b).